The chain runs to 136 residues: Small ribosomal subunit protein bS6 (136 aa).

A disordered region spans residues 99–136; that stretch reads QSEMLKAEENRSERRERRERPEHGGHEGLDGDSDKADE. The segment covering 103–136 has biased composition (basic and acidic residues); that stretch reads LKAEENRSERRERRERPEHGGHEGLDGDSDKADE.

Belongs to the bacterial ribosomal protein bS6 family.

Functionally, binds together with bS18 to 16S ribosomal RNA. This Azotobacter vinelandii (strain DJ / ATCC BAA-1303) protein is Small ribosomal subunit protein bS6.